Here is a 130-residue protein sequence, read N- to C-terminus: Small ribosomal subunit protein uS8 (130 aa).

This sequence belongs to the universal ribosomal protein uS8 family. As to quaternary structure, part of the 30S ribosomal subunit.

In terms of biological role, one of the primary rRNA binding proteins, it binds directly to 16S rRNA central domain where it helps coordinate assembly of the platform of the 30S subunit. The protein is Small ribosomal subunit protein uS8 of Methanosphaerula palustris (strain ATCC BAA-1556 / DSM 19958 / E1-9c).